The primary structure comprises 284 residues: 1D-myo-inositol 2-acetamido-2-deoxy-alpha-D-glucopyranoside deacetylase (284 aa).

Residues His-12, Asp-15, and His-146 each coordinate Zn(2+).

It belongs to the MshB deacetylase family. Zn(2+) serves as cofactor.

The catalysed reaction is 1D-myo-inositol 2-acetamido-2-deoxy-alpha-D-glucopyranoside + H2O = 1D-myo-inositol 2-amino-2-deoxy-alpha-D-glucopyranoside + acetate. In terms of biological role, catalyzes the deacetylation of 1D-myo-inositol 2-acetamido-2-deoxy-alpha-D-glucopyranoside (GlcNAc-Ins) in the mycothiol biosynthesis pathway. This Mycolicibacterium gilvum (strain PYR-GCK) (Mycobacterium gilvum (strain PYR-GCK)) protein is 1D-myo-inositol 2-acetamido-2-deoxy-alpha-D-glucopyranoside deacetylase.